Reading from the N-terminus, the 196-residue chain is Crossover junction endodeoxyribonuclease RuvC (196 aa).

Active-site residues include D19, E80, and D153. Mg(2+) contacts are provided by D19, E80, and D153.

It belongs to the RuvC family. As to quaternary structure, homodimer which binds Holliday junction (HJ) DNA. The HJ becomes 2-fold symmetrical on binding to RuvC with unstacked arms; it has a different conformation from HJ DNA in complex with RuvA. In the full resolvosome a probable DNA-RuvA(4)-RuvB(12)-RuvC(2) complex forms which resolves the HJ. It depends on Mg(2+) as a cofactor.

It localises to the cytoplasm. The catalysed reaction is Endonucleolytic cleavage at a junction such as a reciprocal single-stranded crossover between two homologous DNA duplexes (Holliday junction).. The RuvA-RuvB-RuvC complex processes Holliday junction (HJ) DNA during genetic recombination and DNA repair. Endonuclease that resolves HJ intermediates. Cleaves cruciform DNA by making single-stranded nicks across the HJ at symmetrical positions within the homologous arms, yielding a 5'-phosphate and a 3'-hydroxyl group; requires a central core of homology in the junction. The consensus cleavage sequence is 5'-(A/T)TT(C/G)-3'. Cleavage occurs on the 3'-side of the TT dinucleotide at the point of strand exchange. HJ branch migration catalyzed by RuvA-RuvB allows RuvC to scan DNA until it finds its consensus sequence, where it cleaves and resolves the cruciform DNA. The polypeptide is Crossover junction endodeoxyribonuclease RuvC (Cutibacterium acnes (strain DSM 16379 / KPA171202) (Propionibacterium acnes)).